Here is a 630-residue protein sequence, read N- to C-terminus: A-type voltage-gated potassium channel KCND2 (630 aa).

Over 1 to 184 (MAAGVAAWLP…FENPHTSTMA (184 aa)) the chain is Cytoplasmic. The interval 2–20 (AAGVAAWLPFARAAAIGWM) is interaction with KCNIP1, KCNIP2, and other family members. Thr-38 carries the phosphothreonine modification. The interval 71 to 90 (ERDFFYHPETQQYFFDRDPD) is interaction with KCNIP1. The Zn(2+) site is built by His-105, Cys-111, Cys-132, and Cys-133. The helical transmembrane segment at 185–206 (LVFYYVTGFFIAVSVIANVVET) threads the bilayer. The Extracellular segment spans residues 207-226 (VPCGSSPGHIKELPCGERYA). Residues 227–249 (VAFFCLDTACVMIFTVEYLLRLA) form a helical membrane-spanning segment. At 250 to 256 (AAPSRYR) the chain is on the cytoplasmic side. The chain crosses the membrane as a helical span at residues 257-281 (FVRSVMSIIDVVAILPYYIGLVMTD). Residues 282–287 (NEDVSG) are Extracellular-facing. The helical; Voltage-sensor transmembrane segment at 288–307 (AFVTLRVFRVFRIFKFSRHS) threads the bilayer. The Cytoplasmic portion of the chain corresponds to 308-321 (QGLRILGYTLKSCA). The tract at residues 308-321 (QGLRILGYTLKSCA) is S4-S5 linker. Residues 322–345 (SELGFLLFSLTMAIIIFATVMFYA) traverse the membrane as a helical segment. Residues 346 to 357 (EKGSSASKFTSI) are Extracellular-facing. Residues 358 to 369 (PAAFWYTIVTMT) constitute an intramembrane region (helical). Thr-370, Leu-371, Gly-372, and Tyr-373 together coordinate K(+). A Selectivity filter motif is present at residues 370–375 (TLGYGD). Residues 370 to 377 (TLGYGDMV) lie within the membrane without spanning it. At 378–380 (PKT) the chain is on the extracellular side. Residues 381-403 (IAGKIFGSICSLSGVLVIALPVP) form a helical membrane-spanning segment. Topologically, residues 404 to 630 (VIVSNFSRIY…GGNIVRVSAL (227 aa)) are cytoplasmic. The interval 474–489 (FETQHHHLLHCLEKTT) is required for dendritic targeting. Positions 474–630 (FETQHHHLLH…GGNIVRVSAL (157 aa)) are important for normal channel activation and inactivation, for interaction with KCNIP2, and probably other family members as well. 4 positions are modified to phosphoserine: Ser-548, Ser-552, Ser-572, and Ser-575. The disordered stretch occupies residues 600–622 (IPTPPVTTPEGDDRPESPEYSGG). 2 positions are modified to phosphothreonine: Thr-602 and Thr-607. Ser-616 bears the Phosphoserine mark. Positions 627–630 (VSAL) match the PDZ-binding motif.

This sequence belongs to the potassium channel family. D (Shal) (TC 1.A.1.2) subfamily. Kv4.2/KCND2 sub-subfamily. In terms of assembly, homotetramer or heterotetramer with KCND1 or KCND3. Associates with the regulatory subunits KCNIP2, KCNIP3 and KCNIP4. Interacts with the regulatory subunit KCNIP1; this interaction mediates the capture of both the N- and C-terminus of KCND2, preventing N-type inactivation and stabilizing the S6 conformation, thereby accelerating closed state inactivation and recovery. In vivo, probably exists as heteromeric complex containing variable proportions of KCND1, KCND2, KCND3, KCNIP1, KCNIP2, KCNIP3, KCNIP4, DPP6 and DPP10. The tetrameric channel can associate with up to four regulatory subunits, such as KCNIP2 or KCNIP4. Interaction with four KCNIP4 chains does not reduce interaction with DPP10. Interacts with DLG4 and NCS1/FREQ. Interacts with DLG1. Probably part of a complex consisting of KCNIP1, KCNIP2 isoform 3 and KCND2. Interacts with FLNA, FLNC and DPP10. Identified in a complex with cAMP-dependent protein kinase (PKA), CAV3, AKAP6 and KCND3 in cardiac myocytes. Interacts (via S1 and S2 helices) with DPP6; this interaction stabilizes the conformation of the S1-S2 helices and facilitates S4 conformational change, including S4 sliding up and down, thereby accelerating activation, inactivation, and recovery. In terms of processing, phosphorylation in response to MAPK activation is increased in stimulated dendrites. Interaction with KCNIP2 and DPP6 propomtes phosphorylation by PKA at Ser-552. Phosphorylation at Ser-552 has no effect on interaction with KCNIP3, but is required for the regulation of channel activity by KCNIP3. Phosphorylation at Ser-552 leads to KCND2 internalization. Phosphorylated by MAPK in response to signaling via the metabotropic glutamate receptor GRM5. Phosphorylation at Ser-616 is required for the down-regulation of neuronal A-type currents in response to signaling via GRM5.

Its subcellular location is the cell membrane. It localises to the cell projection. The protein localises to the dendrite. It is found in the synapse. The protein resides in the perikaryon. Its subcellular location is the postsynaptic cell membrane. It localises to the dendritic spine. The protein localises to the sarcolemma. It is found in the cell junction. The protein resides in the membrane. Its subcellular location is the caveola. It catalyses the reaction K(+)(in) = K(+)(out). Functionally, voltage-gated potassium channel that mediates transmembrane potassium transport in excitable membranes, primarily in the brain, but also in rodent heart. Mediates the major part of the dendritic A-type current I(SA) in brain neurons. This current is activated at membrane potentials that are below the threshold for action potentials. It regulates neuronal excitability, prolongs the latency before the first spike in a series of action potentials, regulates the frequency of repetitive action potential firing, shortens the duration of action potentials and regulates the back-propagation of action potentials from the neuronal cell body to the dendrites. Contributes to the regulation of the circadian rhythm of action potential firing in suprachiasmatic nucleus neurons, which regulates the circadian rhythm of locomotor activity. Functions downstream of the metabotropic glutamate receptor GRM5 and plays a role in neuronal excitability and in nociception mediated by activation of GRM5. Mediates the transient outward current I(to) in rodent heart left ventricle apex cells, but not in human heart, where this current is mediated by another family member. Forms tetrameric potassium-selective channels through which potassium ions pass in accordance with their electrochemical gradient. The channel alternates between opened and closed conformations in response to the voltage difference across the membrane. Can form functional homotetrameric channels and heterotetrameric channels that contain variable proportions of KCND2 and KCND3; channel properties depend on the type of pore-forming alpha subunits that are part of the channel. In vivo, membranes probably contain a mixture of heteromeric potassium channel complexes. Interaction with specific isoforms of the regulatory subunits KCNIP1, KCNIP2, KCNIP3 or KCNIP4 strongly increases expression at the cell surface and thereby increases channel activity; it modulates the kinetics of channel activation and inactivation, shifts the threshold for channel activation to more negative voltage values, shifts the threshold for inactivation to less negative voltages and accelerates recovery after inactivation. Likewise, interaction with DPP6 or DPP10 promotes expression at the cell membrane and regulates both channel characteristics and activity. Upon depolarization, the channel goes from a resting closed state (C state) to an activated but non-conducting state (C* state), from there, the channel may either inactivate (I state) or open (O state). This is A-type voltage-gated potassium channel KCND2 from Mustela putorius furo (European domestic ferret).